The following is a 150-amino-acid chain: uncharacterized protein (150 aa).

The 62-residue stretch at Leu-5 to Gly-66 folds into the HTH asnC-type domain. Positions Ile-24–Lys-43 form a DNA-binding region, H-T-H motif.

This is an uncharacterized protein from Pyrococcus horikoshii (strain ATCC 700860 / DSM 12428 / JCM 9974 / NBRC 100139 / OT-3).